Consider the following 365-residue polypeptide: Flavone synthase (365 aa).

Residues H76, H218, D220, and H276 each coordinate Fe cation. Residues 194–295 (MEQKVLINYY…RLSIATFQNP (102 aa)) form the Fe2OG dioxygenase domain. The disordered stretch occupies residues 345–365 (RLQDEKAKLEMKSKSADENLA).

It belongs to the iron/ascorbate-dependent oxidoreductase family. Fe cation is required as a cofactor. The cofactor is L-ascorbate.

It localises to the cytoplasm. It carries out the reaction a flavanone + 2-oxoglutarate + O2 = a flavone + succinate + CO2 + H2O. It participates in secondary metabolite biosynthesis; flavonoid biosynthesis. Its function is as follows. Involved in the conversion of naringenin to apigenin. Acts via a direct 2,3-desaturation of flavanones instead of a sequential hydroxylation/dehydratation mechanism. This Petroselinum crispum (Parsley) protein is Flavone synthase (FNSI).